Here is a 279-residue protein sequence, read N- to C-terminus: Tryptophan prenyltransferase ComQ (279 aa).

Mg(2+) contacts are provided by Asp-67 and Asp-71.

This sequence belongs to the FPP/GGPP synthase family. The cofactor is Mg(2+).

The protein resides in the cell membrane. The enzyme catalyses L-tryptophyl-[protein] + (2E)-geranyl diphosphate = (2S,3R)-3-geranyl-2,3-dihydro-2,N(alpha)-cyclo-L-tryptophyl-[protein] + diphosphate. Part of a major quorum-sensing system that regulates the development of genetic competence. Involved in the maturation of the competence pheromone ComX. Acts by catalyzing the transfer of a geranyl group on the ComX pheromone. Cannot use farnesyl diphosphate (FPP). This is Tryptophan prenyltransferase ComQ from Bacillus spizizenii (Bacillus subtilis subsp. spizizenii).